The primary structure comprises 304 residues: Coenzyme PQQ synthesis protein B (304 aa).

It belongs to the PqqB family.

The protein operates within cofactor biosynthesis; pyrroloquinoline quinone biosynthesis. May be involved in the transport of PQQ or its precursor to the periplasm. The protein is Coenzyme PQQ synthesis protein B of Ectopseudomonas mendocina (strain ymp) (Pseudomonas mendocina).